The following is a 551-amino-acid chain: GMP synthase [glutamine-hydrolyzing] (551 aa).

Positions 1-28 are disordered; that stretch reads MTSSPTAAARTEGEAAPTVPTQVESGTA. Polar residues predominate over residues 19-28; sequence VPTQVESGTA. The Glutamine amidotransferase type-1 domain occupies 37–227; sequence MVAILDFGSQ…VYHICGCEPE (191 aa). Cysteine 114 functions as the Nucleophile in the catalytic mechanism. Active-site residues include histidine 201 and glutamate 203. The GMPS ATP-PPase domain maps to 228 to 426; it reads WTTAAFIEEA…LGLPEEIVQR (199 aa). 255-261 lines the ATP pocket; that stretch reads SGGVDSS.

Homodimer.

It catalyses the reaction XMP + L-glutamine + ATP + H2O = GMP + L-glutamate + AMP + diphosphate + 2 H(+). The protein operates within purine metabolism; GMP biosynthesis; GMP from XMP (L-Gln route): step 1/1. Functionally, catalyzes the synthesis of GMP from XMP. This is GMP synthase [glutamine-hydrolyzing] from Gloeobacter violaceus (strain ATCC 29082 / PCC 7421).